The sequence spans 292 residues: ATP synthase subunit a (292 aa).

7 helical membrane passes run 39-59 (QILG…FYKL), 73-93 (FLLL…DLLG), 102-122 (YFLM…LGGI), 128-148 (SLTF…VMGI), 172-192 (TFIP…SISL), 196-216 (GNIL…IFIF), and 231-251 (VFAG…AGVL).

This sequence belongs to the ATPase A chain family. In terms of assembly, F-type ATPases have 2 components, CF(1) - the catalytic core - and CF(0) - the membrane proton channel. CF(1) has five subunits: alpha(3), beta(3), gamma(1), delta(1), epsilon(1). CF(0) has three main subunits: a(1), b(2) and c(9-12). The alpha and beta chains form an alternating ring which encloses part of the gamma chain. CF(1) is attached to CF(0) by a central stalk formed by the gamma and epsilon chains, while a peripheral stalk is formed by the delta and b chains.

The protein localises to the cell membrane. Its function is as follows. Key component of the proton channel; it plays a direct role in the translocation of protons across the membrane. This is ATP synthase subunit a from Mycoplasma genitalium (strain ATCC 33530 / DSM 19775 / NCTC 10195 / G37) (Mycoplasmoides genitalium).